The following is a 94-amino-acid chain: MATLQQAQQQNNQLTQQNNQLTQQNNQLTQRVNELTRFLEDANRKIQIKENVIKSSEAENRKNLAEINRLHSENHRLIQQSTRTICQKCSMRSN.

The interval 1-22 is disordered; it reads MATLQQAQQQNNQLTQQNNQLT. Residues 1 to 77 are a coiled coil; it reads MATLQQAQQQ…NRLHSENHRL (77 aa).

This is an uncharacterized protein from Acheta domesticus (House cricket).